The following is a 1020-amino-acid chain: Sodium/potassium-transporting ATPase subunit alpha-2 (1020 aa).

Positions Met1–Ala5 are excised as a propeptide. Residues Met1–Asp31 are disordered. The Cytoplasmic segment spans residues Gly6–Pro85. A Phosphoserine modification is found at Ser10. Residues Pro80–Pro82 form an interaction with phosphoinositide-3 kinase region. Residues Glu86 to Ala106 form a helical membrane-spanning segment. The Extracellular segment spans residues Ile107 to Tyr129. Residues Leu130–Ala150 traverse the membrane as a helical segment. Over Lys151–Ile286 the chain is Cytoplasmic. Residues Asp212 to Pro227 show a composition bias toward polar residues. The interval Asp212 to His231 is disordered. Residues Glu287–Val306 form a helical membrane-spanning segment. The Extracellular portion of the chain corresponds to Leu307 to Ala318. The helical transmembrane segment at Val319–Ala336 threads the bilayer. Over Thr337–Leu769 the chain is Cytoplasmic. Asp374 functions as the 4-aspartylphosphate intermediate in the catalytic mechanism. Ser439, Ser450, Ser496, and Ser559 each carry phosphoserine. Thr570 is subject to Phosphothreonine. Residues Ser587 and Ser672 each carry the phosphoserine modification. Residues Asp714 and Asp718 each contribute to the Mg(2+) site. A helical transmembrane segment spans residues Lys770 to Leu789. Over Phe790–Leu799 the chain is Extracellular. Residues Gly800–Ala820 traverse the membrane as a helical segment. Over Tyr821–Lys840 the chain is Cytoplasmic. The residue at position 826 (Ser826) is a Phosphoserine. A helical membrane pass occupies residues Leu841–Phe863. Over Phe864 to Cys915 the chain is Extracellular. A helical transmembrane segment spans residues His916–Lys935. The Cytoplasmic segment spans residues Thr936–Asn948. Ser940 is modified (phosphoserine; by PKA). Residues Lys949–Tyr967 traverse the membrane as a helical segment. Residues Cys968–Val982 are Extracellular-facing. Residues Thr983 to Lys1003 traverse the membrane as a helical segment. Residues Leu1004–Tyr1020 are Cytoplasmic-facing.

The protein belongs to the cation transport ATPase (P-type) (TC 3.A.3) family. Type IIC subfamily. In terms of assembly, the sodium/potassium-transporting ATPase is composed of a catalytic alpha subunit, an auxiliary non-catalytic beta subunit and an additional regulatory subunit. Interacts with regulatory subunit FXYD1.

The protein resides in the membrane. The protein localises to the cell membrane. It catalyses the reaction K(+)(out) + Na(+)(in) + ATP + H2O = K(+)(in) + Na(+)(out) + ADP + phosphate + H(+). In terms of biological role, this is the catalytic component of the active enzyme, which catalyzes the hydrolysis of ATP coupled with the exchange of sodium and potassium ions across the plasma membrane. This action creates the electrochemical gradient of sodium and potassium, providing the energy for active transport of various nutrients. This chain is Sodium/potassium-transporting ATPase subunit alpha-2 (ATP1A2), found in Bos taurus (Bovine).